A 258-amino-acid chain; its full sequence is 5'-nucleotidase SurE (258 aa).

Residues aspartate 10, aspartate 11, serine 41, and asparagine 96 each coordinate a divalent metal cation.

The protein belongs to the SurE nucleotidase family. Requires a divalent metal cation as cofactor.

Its subcellular location is the cytoplasm. The enzyme catalyses a ribonucleoside 5'-phosphate + H2O = a ribonucleoside + phosphate. Functionally, nucleotidase that shows phosphatase activity on nucleoside 5'-monophosphates. The polypeptide is 5'-nucleotidase SurE (Sorangium cellulosum (strain So ce56) (Polyangium cellulosum (strain So ce56))).